Consider the following 183-residue polypeptide: uncharacterized protein (183 aa).

This sequence belongs to the asfivirus S183L family.

This is an uncharacterized protein from African swine fever virus (isolate Warthog/Namibia/Wart80/1980) (ASFV).